The sequence spans 624 residues: Aliphatic sulfonate oxidoreductase, WOR-like subunit (624 aa).

Tungstopterin contacts are provided by Lys77, Ser93, Val94, Ser96, His195, Ala196, Gly198, and Tyr199. 3 residues coordinate [4Fe-4S] cluster: Asp299, Cys302, and Cys306. Tungstopterin-binding residues include Asp353, Leu357, Asp358, Gly359, Thr470, Asp490, Ile494, Cys495, and Asn496. Cys495 contributes to the [4Fe-4S] cluster binding site. The segment at 552 to 575 is disordered; the sequence is KDDDNPPRFYEPLPSGPVKGKAPN.

It belongs to the AOR/FOR family. In terms of assembly, heterodimer composed of a small WOR5-S subunit, with four [4Fe-4S] clusters, and a large WOR5-L subunit, containing the active site tungsto-bispyranopterin cofactor as well as another [4Fe-4S] cluster. Requires [4Fe-4S] cluster as cofactor. Tungstopterin is required as a cofactor.

It is found in the cytoplasm. The enzyme catalyses an aliphatic sulfonate + 4 oxidized [4Fe-4S]-[ferredoxin] + 2 H2O = 4 reduced [4Fe-4S]-[ferredoxin] + a carboxylate + sulfite + 6 H(+). The catalysed reaction is an aliphatic sulfonate + 2 oxidized [4Fe-4S]-[ferredoxin] + H2O = 2 reduced [4Fe-4S]-[ferredoxin] + an aldehyde + sulfite + 3 H(+). It carries out the reaction 2 oxidized [4Fe-4S]-[ferredoxin] + an aldehyde + H2O = 2 reduced [4Fe-4S]-[ferredoxin] + a carboxylate + 3 H(+). It catalyses the reaction 4 oxidized [4Fe-4S]-[ferredoxin] + taurine + 2 H2O = 4 reduced [4Fe-4S]-[ferredoxin] + sulfite + glycine + 6 H(+). The enzyme catalyses 2 oxidized [4Fe-4S]-[ferredoxin] + taurine + H2O = aminoacetaldehyde + 2 reduced [4Fe-4S]-[ferredoxin] + sulfite + 3 H(+). The catalysed reaction is aminoacetaldehyde + 2 oxidized [4Fe-4S]-[ferredoxin] + H2O = 2 reduced [4Fe-4S]-[ferredoxin] + glycine + 3 H(+). In terms of biological role, WOR-like catalytic subunit of an oxidoreductase that can desulfonate and oxidize aliphatic sulfonates such as taurine. The activity involves two steps: an oxidative desulfonation reaction, followed by the activation of a second water molecule and oxidation of the resulting aldehyde. May be involved in the oxidation of various aliphatic sulfonates and also phosphonates. In vitro, has a broad substrate specificity with a high affinity for several substituted and nonsubstituted aliphatic and aromatic aldehydes with various chain lengths, with methyl viologen or benzyl viologen as electron acceptor. Ferredoxin is the physiological electron acceptor. In Pyrococcus furiosus (strain ATCC 43587 / DSM 3638 / JCM 8422 / Vc1), this protein is Aliphatic sulfonate oxidoreductase, WOR-like subunit.